The primary structure comprises 141 residues: Large ribosomal subunit protein uL16 (141 aa).

Positions 1–17 are enriched in basic residues; the sequence is MLQPKRTKYRKVQKGRM. The interval 1-29 is disordered; the sequence is MLQPKRTKYRKVQKGRMKGNSQRGHELSN.

This sequence belongs to the universal ribosomal protein uL16 family. Part of the 50S ribosomal subunit.

In terms of biological role, binds 23S rRNA and is also seen to make contacts with the A and possibly P site tRNAs. The chain is Large ribosomal subunit protein uL16 from Flavobacterium johnsoniae (strain ATCC 17061 / DSM 2064 / JCM 8514 / BCRC 14874 / CCUG 350202 / NBRC 14942 / NCIMB 11054 / UW101) (Cytophaga johnsonae).